A 320-amino-acid chain; its full sequence is Mycothiol acetyltransferase (320 aa).

N-acetyltransferase domains lie at 8 to 141 and 152 to 320; these read SHLT…RSLR and LQIR…AALA. Glu-36 serves as a coordination point for 1D-myo-inositol 2-(L-cysteinylamino)-2-deoxy-alpha-D-glucopyranoside. Residues 80-82 and 88-93 contribute to the acetyl-CoA site; these read LVV and RRGIAT. 1D-myo-inositol 2-(L-cysteinylamino)-2-deoxy-alpha-D-glucopyranoside-binding residues include Glu-179, Lys-229, and Glu-239. Acetyl-CoA contacts are provided by residues 243-245 and 250-256; these read LGV and QGRGLGR. Tyr-284 serves as a coordination point for 1D-myo-inositol 2-(L-cysteinylamino)-2-deoxy-alpha-D-glucopyranoside. 289-294 serves as a coordination point for acetyl-CoA; sequence NIAAVR.

It belongs to the acetyltransferase family. MshD subfamily. In terms of assembly, monomer.

The enzyme catalyses 1D-myo-inositol 2-(L-cysteinylamino)-2-deoxy-alpha-D-glucopyranoside + acetyl-CoA = mycothiol + CoA + H(+). Its function is as follows. Catalyzes the transfer of acetyl from acetyl-CoA to desacetylmycothiol (Cys-GlcN-Ins) to form mycothiol. In Mycobacterium ulcerans (strain Agy99), this protein is Mycothiol acetyltransferase.